Consider the following 402-residue polypeptide: Protein FixF (402 aa).

The chain is Protein FixF (fixF) from Sinorhizobium fredii (strain NBRC 101917 / NGR234).